Consider the following 70-residue polypeptide: DNA gyrase inhibitor YacG (70 aa).

The Zn(2+) site is built by cysteine 20, cysteine 23, cysteine 35, and cysteine 39.

This sequence belongs to the DNA gyrase inhibitor YacG family. In terms of assembly, interacts with GyrB. Zn(2+) is required as a cofactor.

Functionally, inhibits all the catalytic activities of DNA gyrase by preventing its interaction with DNA. Acts by binding directly to the C-terminal domain of GyrB, which probably disrupts DNA binding by the gyrase. The polypeptide is DNA gyrase inhibitor YacG (Rhizobium leguminosarum bv. trifolii (strain WSM2304)).